The primary structure comprises 197 residues: Phospholipid hydroperoxide glutathione peroxidase (197 aa).

Serine 40 carries the post-translational modification Phosphoserine. Selenocysteine 73 is a catalytic residue. Position 73 (selenocysteine 73) is a non-standard amino acid, selenocysteine.

The protein belongs to the glutathione peroxidase family. Monomer. Has a tendency to form higher mass oligomers. Interacts with FUNDC1; this interaction promotes GPX4 recruitment into mitochondria through TOM/TIM complex where it is degraded by mitophagy.

The protein resides in the mitochondrion. Its subcellular location is the cytoplasm. The enzyme catalyses a hydroperoxy polyunsaturated fatty acid + 2 glutathione = a hydroxy polyunsaturated fatty acid + glutathione disulfide + H2O. It catalyses the reaction 2 glutathione + H2O2 = glutathione disulfide + 2 H2O. It carries out the reaction tert-butyl hydroperoxide + 2 glutathione = tert-butanol + glutathione disulfide + H2O. The catalysed reaction is cumene hydroperoxide + 2 glutathione = 2-phenylpropan-2-ol + glutathione disulfide + H2O. The enzyme catalyses (9S)-hydroperoxy-(10E,12Z)-octadecadienoate + 2 glutathione = (9S)-hydroxy-(10E,12Z)-octadecadienoate + glutathione disulfide + H2O. It catalyses the reaction (13S)-hydroperoxy-(9Z,11E)-octadecadienoate + 2 glutathione = (13S)-hydroxy-(9Z,11E)-octadecadienoate + glutathione disulfide + H2O. It carries out the reaction (5S)-hydroperoxy-(6E,8Z,11Z,14Z)-eicosatetraenoate + 2 glutathione = (5S)-hydroxy-(6E,8Z,11Z,14Z)-eicosatetraenoate + glutathione disulfide + H2O. The catalysed reaction is (12R)-hydroperoxy-(5Z,8Z,10E,14Z)-eicosatetraenoate + 2 glutathione = (12R)-hydroxy-(5Z,8Z,10E,14Z)-eicosatetraenoate + glutathione disulfide + H2O. The enzyme catalyses (12S)-hydroperoxy-(5Z,8Z,10E,14Z)-eicosatetraenoate + 2 glutathione = (12S)-hydroxy-(5Z,8Z,10E,14Z)-eicosatetraenoate + glutathione disulfide + H2O. It catalyses the reaction (15S)-hydroperoxy-(5Z,8Z,11Z,13E)-eicosatetraenoate + 2 glutathione = (15S)-hydroxy-(5Z,8Z,11Z,13E)-eicosatetraenoate + glutathione disulfide + H2O. It carries out the reaction (5S)-hydroperoxy-(6E,8Z,11Z,14Z,17Z)-eicosapentaenoate + 2 glutathione = (5S)-hydroxy-(6E,8Z,11Z,14Z,17Z)-eicosapentaenoate + glutathione disulfide + H2O. The catalysed reaction is (12S)-hydroperoxy-(5Z,8Z,10E,14Z,17Z)-eicosapentaenoate + 2 glutathione = (12S)-hydroxy-(5Z,8Z,10E,14Z,17Z)-eicosapentaenoate + glutathione disulfide + H2O. The enzyme catalyses (15S)-hydroperoxy-(5Z,8Z,11Z,13E,17Z)-eicosapentaenoate + 2 glutathione = (15S)-hydroxy-(5Z,8Z,11Z,13E,17Z)-eicosapentaenoate + glutathione disulfide + H2O. It catalyses the reaction (15S)-hydroperoxy-(11Z,13E)-eicosadienoate + 2 glutathione = (15S)-hydroxy-(11Z,13E)-eicosadienoate + glutathione disulfide + H2O. It carries out the reaction (17S)-hydroperoxy-(4Z,7Z,10Z,13Z,15E,19Z)-docosahexaenoate + 2 glutathione = (17S)-hydroxy-(4Z,7Z,10Z,13Z,15E,19Z)-docosahexaenoate + glutathione disulfide + H2O. The catalysed reaction is a hydroperoxy-1,2-diacyl-glycero-3-phosphocholine + 2 glutathione = a hydroxy-1,2-diacyl-glycero-3-phosphocholine + glutathione disulfide + H2O. In terms of biological role, essential antioxidant peroxidase that directly reduces phospholipid hydroperoxide even if they are incorporated in membranes and lipoproteins. Can also reduce fatty acid hydroperoxide, cholesterol hydroperoxide and thymine hydroperoxide. Plays a key role in protecting cells from oxidative damage by preventing membrane lipid peroxidation. Required to prevent cells from ferroptosis, a non-apoptotic cell death resulting from an iron-dependent accumulation of lipid reactive oxygen species. The presence of selenocysteine (Sec) versus Cys at the active site is essential for life: it provides resistance to overoxidation and prevents cells against ferroptosis. The presence of Sec at the active site is also essential for the survival of a specific type of parvalbumin-positive interneurons, thereby preventing against fatal epileptic seizures. May be required to protect cells from the toxicity of ingested lipid hydroperoxides. Required for normal sperm development and male fertility. Essential for maturation and survival of photoreceptor cells. Plays a role in a primary T-cell response to viral and parasitic infection by protecting T-cells from ferroptosis and by supporting T-cell expansion. Plays a role of glutathione peroxidase in platelets in the arachidonic acid metabolism. Reduces hydroperoxy ester lipids formed by a 15-lipoxygenase that may play a role as down-regulator of the cellular 15-lipoxygenase pathway. Can also reduce small soluble hydroperoxides such as H2O2, cumene hydroperoxide and tert-butyl hydroperoxide. In Bos taurus (Bovine), this protein is Phospholipid hydroperoxide glutathione peroxidase.